The following is a 181-amino-acid chain: MKLLLLLLCLGLTLVCGHAEEASSTRGNLDVAKLNGDWFSIVVASNKREKIEENGSMRVFMQHIDVLENSLGFKFRIKENGECRELYLVAYKTPEDGEYFVEYDGGNTFTILKTDYDRYVMFHLINFKNGETFQLMVLYGRTKDLSSDIKEKFAKLCEAHGITRDNIIDLTKTDRCLQARG.

The signal sequence occupies residues 1 to 19 (MKLLLLLLCLGLTLVCGHA). An N-linked (GlcNAc...) asparagine glycan is attached at Asn-54. Cysteines 83 and 176 form a disulfide.

It belongs to the calycin superfamily. Lipocalin family. Abundant in the urine of adult male rats but absent from that of females.

It is found in the cytoplasm. The protein resides in the cytosol. Its subcellular location is the secreted. Functionally, major urinary proteins (Mups) bind and release pheromones. They may also protect pheromones from oxidation. In this context, they play a role in the regulation of social behaviors, such as aggression, mating, pup-suckling, territory establishment and dominance. Acts as a kairomone, detected by the prey vomeronasal organ and inducing fear reactions in mice. The chain is Major urinary protein from Rattus norvegicus (Rat).